We begin with the raw amino-acid sequence, 345 residues long: MTDNKALKILQEFLDISEPTLEQAIEVFTPLTVGEYDDIHIAALLTHIRTRGETFADVAGAARAFLNAGHPFPITGKGLMDTAGTGGDGANTINVTTGASLVASAGGVKMVKHGNRSVSSKSGSADVLEALGIPLNLDPDRAVRQLEASNFTFLFAPAYNPAVAHVQPVRKGLGISTLFNTMGPLLSPGRPEFQIMGIANPEQGQLIAEVFKDLGRTRALVVHGAGTDEIAVHGTTQVWELRDGTISHYELTPEDLGISHHELADLAGGNGEENAKALRAVFAGTGEPAHHDAIAATAGAMFYLNGTTDSIHEGVTHADQLIKNGTVAAWLKKHEEANYGSADRA.

5-phospho-alpha-D-ribose 1-diphosphate is bound by residues Gly-84, 87–88 (GD), Thr-92, 94–97 (NVTT), 112–120 (KHGNRSVSS), and Ser-124. Residue Gly-84 participates in anthranilate binding. Thr-96 contacts Mg(2+). Position 115 (Asn-115) interacts with anthranilate. Arg-170 contributes to the anthranilate binding site. Positions 228 and 229 each coordinate Mg(2+).

Belongs to the anthranilate phosphoribosyltransferase family. Homodimer. It depends on Mg(2+) as a cofactor.

It catalyses the reaction N-(5-phospho-beta-D-ribosyl)anthranilate + diphosphate = 5-phospho-alpha-D-ribose 1-diphosphate + anthranilate. The protein operates within amino-acid biosynthesis; L-tryptophan biosynthesis; L-tryptophan from chorismate: step 2/5. Functionally, catalyzes the transfer of the phosphoribosyl group of 5-phosphorylribose-1-pyrophosphate (PRPP) to anthranilate to yield N-(5'-phosphoribosyl)-anthranilate (PRA). The sequence is that of Anthranilate phosphoribosyltransferase from Corynebacterium aurimucosum (strain ATCC 700975 / DSM 44827 / CIP 107346 / CN-1) (Corynebacterium nigricans).